Reading from the N-terminus, the 122-residue chain is Basic phospholipase A2 homolog myotoxin II (122 aa).

Cystine bridges form between cysteine 26–cysteine 116, cysteine 28–cysteine 44, cysteine 43–cysteine 95, cysteine 49–cysteine 122, cysteine 50–cysteine 88, cysteine 57–cysteine 81, and cysteine 75–cysteine 86. Residues 105–118 (KKYRYNYLKPFCKK) are important for membrane-damaging activities in eukaryotes and bacteria; heparin-binding.

Belongs to the phospholipase A2 family. Group II subfamily. K49 sub-subfamily. As to quaternary structure, homodimer; non-covalently linked (probable alternative/compact dimer conformation). As to expression, expressed by the venom gland.

Its subcellular location is the secreted. With respect to regulation, myotoxic activity is inhibited by suramin and rosmarinic acid. Cytotoxic and myotoxic activities are inhibited by pre-incubation with varespladib. Suramin inhibits this myotoxin by (i) direct blockage of the MDoS and MDiS, preventing the toxin/membrane interaction and disruption and (ii) formation of an oligomeric complex, resulting in a tetrameric configuration for which both MDoS and MDiS becomes physically inaccessible, thus avoiding any possibility of toxin-membrane interaction or disruption. Heparin completely inhibits the cytotoxic and bactericidal activities, but only partially the myotoxic, edema-inducing and lethal effects. Its function is as follows. Snake venom phospholipase A2 (PLA2) homolog that lacks enzymatic activity. Shows high myotoxin activities. Also shows neurotoxicity, since it induces muscle paralysis when tested on mouse phrenic-diaphragm preparations. Displays edema-inducing activities. Also displays antimicrobial activity against E.coli and C.albicans, as well as antitumoral activity against some human and mice cell lines. In addition, it is effective as parasiticidal agent against Leishmania sp. and S.mansoni. It also disrupts negatively charged liposomes in a dose- and temperature-dependent manner and shows toxicity by intraperitoneal route. In contrast to other phospholipase A2-like toxins, this myotoxin does not require fatty acid binding to be active. The protein is Basic phospholipase A2 homolog myotoxin II of Bothrops moojeni (Lance-headed viper).